The sequence spans 365 residues: Phospho-N-acetylmuramoyl-pentapeptide-transferase (365 aa).

The next 11 membrane-spanning stretches (helical) occupy residues 15 to 35 (WPAAILIGAVISAAFVADRLI), 39 to 59 (LLSLPLMAAILVSTLITWWGV), 84 to 104 (GTPTMGGLLVVPVGVIIGGLV), 114 to 134 (LLAIALVTLAYMVIGGVDDWS), 156 to 176 (AAVLFLGWAGWQGWIAGTVSL), 178 to 198 (FNLDLPLHWLIWPLALFVFLA), 209 to 229 (LDGLASGCGALVFTGLALQLM), 235 to 255 (GDPALAGFCMAMAGCWLGFLI), 263 to 283 (VFMGDTGSLAMGAALSAVALL), 291 to 311 (LLMGGVFLAESVSVIVQVWVF), and 343 to 363 (VVVPLFWLVTAGLVMLGLGLH).

The protein belongs to the glycosyltransferase 4 family. MraY subfamily. The cofactor is Mg(2+).

Its subcellular location is the cell inner membrane. It carries out the reaction UDP-N-acetyl-alpha-D-muramoyl-L-alanyl-gamma-D-glutamyl-meso-2,6-diaminopimeloyl-D-alanyl-D-alanine + di-trans,octa-cis-undecaprenyl phosphate = di-trans,octa-cis-undecaprenyl diphospho-N-acetyl-alpha-D-muramoyl-L-alanyl-D-glutamyl-meso-2,6-diaminopimeloyl-D-alanyl-D-alanine + UMP. It participates in cell wall biogenesis; peptidoglycan biosynthesis. Catalyzes the initial step of the lipid cycle reactions in the biosynthesis of the cell wall peptidoglycan: transfers peptidoglycan precursor phospho-MurNAc-pentapeptide from UDP-MurNAc-pentapeptide onto the lipid carrier undecaprenyl phosphate, yielding undecaprenyl-pyrophosphoryl-MurNAc-pentapeptide, known as lipid I. The sequence is that of Phospho-N-acetylmuramoyl-pentapeptide-transferase from Synechococcus sp. (strain WH7803).